Consider the following 608-residue polypeptide: Glutamyl-tRNA(Gln) amidotransferase subunit E (608 aa).

Residues E402–A422 are disordered.

Belongs to the GatB/GatE family. GatE subfamily. In terms of assembly, heterodimer of GatD and GatE.

The enzyme catalyses L-glutamyl-tRNA(Gln) + L-glutamine + ATP + H2O = L-glutaminyl-tRNA(Gln) + L-glutamate + ADP + phosphate + H(+). In terms of biological role, allows the formation of correctly charged Gln-tRNA(Gln) through the transamidation of misacylated Glu-tRNA(Gln) in organisms which lack glutaminyl-tRNA synthetase. The reaction takes place in the presence of glutamine and ATP through an activated gamma-phospho-Glu-tRNA(Gln). The GatDE system is specific for glutamate and does not act on aspartate. In Pyrobaculum calidifontis (strain DSM 21063 / JCM 11548 / VA1), this protein is Glutamyl-tRNA(Gln) amidotransferase subunit E.